A 513-amino-acid polypeptide reads, in one-letter code: Probable G-protein coupled receptor Mth-like 9 (513 aa).

Residues 1-19 (MVSPLIILLIIWLSVGAKS) form the signal peptide. Over 20–207 (VEIASINHPC…NCERFQTGYR (188 aa)) the chain is Extracellular. Intrachain disulfides connect Cys29/Cys82, Cys84/Cys89, Cys93/Cys181, and Cys94/Cys107. The N-linked (GlcNAc...) asparagine glycan is linked to Asn36. N-linked (GlcNAc...) asparagine glycans are attached at residues Asn106, Asn125, and Asn165. A helical transmembrane segment spans residues 208 to 228 (VWIYAICSIIAIIINIFILSL). Topologically, residues 229-242 (LGSVRDARKSHYGQ) are cytoplasmic. The chain crosses the membrane as a helical span at residues 243–263 (LIIYYLLSMIVGYSLLVYLAL). The Extracellular segment spans residues 264–276 (KNPMKLSHVACRN). A helical transmembrane segment spans residues 277 to 297 (IGFLAYFCIMLSFVFLAICSL). Over 298–314 (DFLLKFKQKAVRSSVRR) the chain is Cytoplasmic. The chain crosses the membrane as a helical span at residues 315–335 (LSLALAVLAVIGLRFLVSLAQ). Topologically, residues 336–360 (DSKLPKHFKPGMGEDYCWFDVRTWG) are extracellular. A helical transmembrane segment spans residues 361 to 381 (ILIYYYGPIALLLIFSIVCCL). At 382-403 (KAYFSIYELPPDTQYILGTQLK) the chain is on the cytoplasmic side. Residues 404 to 424 (IVKTHFYAFSAYIVGVFAVWI) traverse the membrane as a helical segment. Residues 425-438 (REIVVYIMARVREH) lie on the Extracellular side of the membrane. The chain crosses the membrane as a helical span at residues 439–459 (FFIIDFWSGICILGLAIAGFI). Over 460-513 (LLLGKNLHVKSWWAINVESSQTDLSIINARVYKFDEKGDLKSSDSPYKPTVTSL) the chain is Cytoplasmic.

Belongs to the G-protein coupled receptor 2 family. Mth subfamily.

The protein resides in the cell membrane. This chain is Probable G-protein coupled receptor Mth-like 9 (mthl9), found in Drosophila melanogaster (Fruit fly).